We begin with the raw amino-acid sequence, 750 residues long: Photosystem I P700 chlorophyll a apoprotein A1 (750 aa).

Transmembrane regions (helical) follow at residues 70 to 93, 156 to 179, 195 to 219, 291 to 309, 346 to 369, 385 to 411, 433 to 455, and 531 to 549; these read VFSA…FHGA, LYCT…FHYH, LNHH…HVSL, IAHH…GHMY, WHAQ…HHMY, LSLF…IFMV, AIIS…LYIH, and FLVH…LILL. Cys573 and Cys582 together coordinate [4Fe-4S] cluster. The next 2 helical transmembrane spans lie at 589–610 and 664–686; these read HVFL…HFSW and LSAY…MFLF. Position 675 (His675) interacts with chlorophyll a'. Residues Met683 and Tyr691 each contribute to the chlorophyll a site. A phylloquinone-binding site is contributed by Trp692. Residues 724–744 form a helical membrane-spanning segment; the sequence is AVGVTHYLLGGIATTWAFFLA.

This sequence belongs to the PsaA/PsaB family. The PsaA/B heterodimer binds the P700 chlorophyll special pair and subsequent electron acceptors. PSI consists of a core antenna complex that captures photons, and an electron transfer chain that converts photonic excitation into a charge separation. The eukaryotic PSI reaction center is composed of at least 11 subunits. Requires P700 is a chlorophyll a/chlorophyll a' dimer, A0 is one or more chlorophyll a, A1 is one or both phylloquinones and FX is a shared 4Fe-4S iron-sulfur center. as cofactor.

The protein localises to the plastid. It is found in the chloroplast thylakoid membrane. It catalyses the reaction reduced [plastocyanin] + hnu + oxidized [2Fe-2S]-[ferredoxin] = oxidized [plastocyanin] + reduced [2Fe-2S]-[ferredoxin]. Its function is as follows. PsaA and PsaB bind P700, the primary electron donor of photosystem I (PSI), as well as the electron acceptors A0, A1 and FX. PSI is a plastocyanin-ferredoxin oxidoreductase, converting photonic excitation into a charge separation, which transfers an electron from the donor P700 chlorophyll pair to the spectroscopically characterized acceptors A0, A1, FX, FA and FB in turn. Oxidized P700 is reduced on the lumenal side of the thylakoid membrane by plastocyanin. In Jasminum nudiflorum (Winter jasmine), this protein is Photosystem I P700 chlorophyll a apoprotein A1.